The following is a 308-amino-acid chain: MQIKFLTTLATVLTSVAAMGDLAFNLGVKNDDGTCKDVSTFEGDLDFLKSHSKIIKTYAVSDCNTLQNLGPAAEAEGFQIQLGIWPNDDAHFEAEKEALQNYLPKISVSTIKIFLVGSEALYREDLTASELASKINDIKGLVKGIKGKNGKSYSSVPVGTVDSWDVLVDGASKPAIDAADVVYSNSFSYWQKNSQANASYSLFDDVMQALQTLQTAKGSTDIEFWVGETGWPTDGSSYGDSVPSVENAADQWQKGICALRAWGINVAVYEAFDEAWKPDTSGTSSVEKHWGVWQSDKTLKYSIDCKFN.

An N-terminal signal peptide occupies residues 1–18 (MQIKFLTTLATVLTSVAA). The active-site Proton donor is E119. N-linked (GlcNAc...) asparagine glycosylation is present at N197. E228 serves as the catalytic Nucleophile.

Belongs to the glycosyl hydrolase 17 family.

The protein resides in the secreted. The protein localises to the cell wall. The catalysed reaction is Successive hydrolysis of beta-D-glucose units from the non-reducing ends of (1-&gt;3)-beta-D-glucans, releasing alpha-glucose.. The chain is Glucan 1,3-beta-glucosidase (BGL2) from Candida albicans (Yeast).